A 142-amino-acid chain; its full sequence is Cytochrome c-type biogenesis protein CcmE (142 aa).

The Cytoplasmic portion of the chain corresponds to 1–2; sequence MK. A helical; Signal-anchor for type II membrane protein membrane pass occupies residues 3-23; it reads GKYLLGILVILGALGYMVFGG. Residues 24 to 142 lie on the Periplasmic side of the membrane; that stretch reads LGRNLVYFLT…EVRKLIEEAQ (119 aa). The heme site is built by His-118 and Tyr-122.

Belongs to the CcmE/CycJ family.

The protein localises to the cell inner membrane. In terms of biological role, heme chaperone required for the biogenesis of c-type cytochromes. Transiently binds heme delivered by CcmC and transfers the heme to apo-cytochromes in a process facilitated by CcmF and CcmH. The sequence is that of Cytochrome c-type biogenesis protein CcmE from Thermus thermophilus (strain ATCC BAA-163 / DSM 7039 / HB27).